The sequence spans 36 residues: Hemoglobin subunit beta (36 aa).

One can recognise a Globin domain in the interval 1–36 (VCVLAHHFGKEFTPQVQAAYQKVVAGVANALAHKYH). Residue Lys34 is modified to N6-acetyllysine.

Belongs to the globin family. Heterotetramer of two alpha chains and two beta chains. As to expression, red blood cells.

Its function is as follows. Involved in oxygen transport from the lung to the various peripheral tissues. This is Hemoglobin subunit beta (HBB) from Pongo pygmaeus (Bornean orangutan).